We begin with the raw amino-acid sequence, 171 residues long: Large ribosomal subunit protein bL9 (171 aa).

It belongs to the bacterial ribosomal protein bL9 family.

Binds to the 23S rRNA. This chain is Large ribosomal subunit protein bL9, found in Rickettsia africae (strain ESF-5).